The sequence spans 155 residues: Molybdopterin synthase catalytic subunit 1 (155 aa).

Substrate is bound by residues histidine 101 to arginine 102, lysine 117, and lysine 124 to glutamate 126.

It belongs to the MoaE family. MOCS2B subfamily. Heterotetramer; composed of 2 small (MOCS2A) and 2 large (MOCS2B) subunits.

It localises to the cytoplasm. The enzyme catalyses 2 [molybdopterin-synthase sulfur-carrier protein]-C-terminal-Gly-aminoethanethioate + cyclic pyranopterin phosphate + H2O = molybdopterin + 2 [molybdopterin-synthase sulfur-carrier protein]-C-terminal Gly-Gly + 2 H(+). It participates in cofactor biosynthesis; molybdopterin biosynthesis. Its function is as follows. Catalytic subunit of the molybdopterin synthase complex, a complex that catalyzes the conversion of precursor Z into molybdopterin. Acts by mediating the incorporation of 2 sulfur atoms from thiocarboxylated MOCS2A into precursor Z to generate a dithiolene group. This chain is Molybdopterin synthase catalytic subunit 1, found in Aedes aegypti (Yellowfever mosquito).